The sequence spans 84 residues: NAD(P)H-quinone oxidoreductase subunit O (84 aa).

Belongs to the complex I NdhO subunit family. As to quaternary structure, NDH-1 can be composed of about 15 different subunits; different subcomplexes with different compositions have been identified which probably have different functions.

It localises to the cellular thylakoid membrane. It catalyses the reaction a plastoquinone + NADH + (n+1) H(+)(in) = a plastoquinol + NAD(+) + n H(+)(out). The catalysed reaction is a plastoquinone + NADPH + (n+1) H(+)(in) = a plastoquinol + NADP(+) + n H(+)(out). In terms of biological role, NDH-1 shuttles electrons from an unknown electron donor, via FMN and iron-sulfur (Fe-S) centers, to quinones in the respiratory and/or the photosynthetic chain. The immediate electron acceptor for the enzyme in this species is believed to be plastoquinone. Couples the redox reaction to proton translocation, and thus conserves the redox energy in a proton gradient. Cyanobacterial NDH-1 also plays a role in inorganic carbon-concentration. The protein is NAD(P)H-quinone oxidoreductase subunit O of Synechococcus sp. (strain CC9605).